A 119-amino-acid polypeptide reads, in one-letter code: Large ribosomal subunit protein bL20 (119 aa).

Belongs to the bacterial ribosomal protein bL20 family.

Its function is as follows. Binds directly to 23S ribosomal RNA and is necessary for the in vitro assembly process of the 50S ribosomal subunit. It is not involved in the protein synthesizing functions of that subunit. The protein is Large ribosomal subunit protein bL20 of Clostridium novyi (strain NT).